The sequence spans 83 residues: Large ribosomal subunit protein bL27 (83 aa).

The tract at residues 1 to 26 (MAHKKAGGSSKNGRDSRGQRRGVKRF) is disordered.

This sequence belongs to the bacterial ribosomal protein bL27 family.

The sequence is that of Large ribosomal subunit protein bL27 from Desulfosudis oleivorans (strain DSM 6200 / JCM 39069 / Hxd3) (Desulfococcus oleovorans).